The primary structure comprises 147 residues: Protein phosphatase 1 regulatory subunit 14A (147 aa).

Residues 1–11 (MAAQRLGKRVL) are compositionally biased toward basic residues. Residues 1–37 (MAAQRLGKRVLSKLQSPSRARGPGGSPSGLQKRHARV) are disordered. Residue Ser26 is modified to Phosphoserine. Residues 35–120 (ARVTVKYDRR…LLAKLRGLHK (86 aa)) are inhibitory. Thr38 carries the phosphothreonine modification. The segment at 118–147 (LHKQPGFPQPSPSDDPSLSPRQDPAHTAPP) is disordered. Phosphoserine is present on residues Ser128, Ser134, and Ser136.

Belongs to the PP1 inhibitor family.

The protein resides in the cytoplasm. In terms of biological role, inhibitor of PPP1CA. Has over 1000-fold higher inhibitory activity when phosphorylated, creating a molecular switch for regulating the phosphorylation status of PPP1CA substrates and smooth muscle contraction. In Rattus norvegicus (Rat), this protein is Protein phosphatase 1 regulatory subunit 14A (Ppp1r14a).